A 233-amino-acid polypeptide reads, in one-letter code: Phytol kinase (233 aa).

6 helical membrane passes run 9-29 (MALP…AVVL), 56-76 (VVLI…AGVF), 96-118 (VGRH…GGFF), 122-144 (LPIF…ALVG), 172-192 (FLVT…VLVV), and 213-233 (NLTV…LWLG).

This sequence belongs to the polyprenol kinase family.

The protein resides in the cell membrane. It carries out the reaction phytol + CTP = phytyl phosphate + CDP + H(+). Its pathway is cofactor biosynthesis; tocopherol biosynthesis. In terms of biological role, catalyzes the CTP-dependent phosphorylation of phytol to phytylmonophosphate (PMP). Can also use UTP as an alternative phosphate donor, but not ATP or GTP. Is involved in tocopherol biosynthesis, via the utilization of phytol generated by chlorophyll degradation. Also plays a significant but not critical role in the recycling of phytol for the biosynthesis of new chlorophyll molecules. This is Phytol kinase from Synechocystis sp. (strain ATCC 27184 / PCC 6803 / Kazusa).